We begin with the raw amino-acid sequence, 591 residues long: DEAD-box ATP-dependent RNA helicase 35 (591 aa).

Residues K146–V174 carry the Q motif motif. A Helicase ATP-binding domain is found at L177–V361. A190–T197 is a binding site for ATP. The DEAD box signature appears at D309 to D312. The Helicase C-terminal domain maps to D372–N532. The CCHC-type zinc-finger motif lies at K548–K565.

The protein belongs to the DEAD box helicase family. DDX41 subfamily.

It carries out the reaction ATP + H2O = ADP + phosphate + H(+). This is DEAD-box ATP-dependent RNA helicase 35 (RH35) from Arabidopsis thaliana (Mouse-ear cress).